The chain runs to 394 residues: Chaperone protein DnaJ (394 aa).

A J domain is found at 5 to 75 (DYYEVLGVDK…EKKQQYDQFG (71 aa)). The segment at 150-231 (GVEKTIKYKR…CRGTGTAKET (82 aa)) adopts a CR-type zinc-finger fold. Positions 163, 166, 179, 182, 205, 208, 219, and 222 each coordinate Zn(2+). CXXCXGXG motif repeat units follow at residues 163–170 (CEHCHGTG), 179–186 (CPTCNGQG), 205–212 (CPDCHGTG), and 219–226 (CKHCRGTG).

It belongs to the DnaJ family. In terms of assembly, homodimer. It depends on Zn(2+) as a cofactor.

It localises to the cytoplasm. Participates actively in the response to hyperosmotic and heat shock by preventing the aggregation of stress-denatured proteins and by disaggregating proteins, also in an autonomous, DnaK-independent fashion. Unfolded proteins bind initially to DnaJ; upon interaction with the DnaJ-bound protein, DnaK hydrolyzes its bound ATP, resulting in the formation of a stable complex. GrpE releases ADP from DnaK; ATP binding to DnaK triggers the release of the substrate protein, thus completing the reaction cycle. Several rounds of ATP-dependent interactions between DnaJ, DnaK and GrpE are required for fully efficient folding. Also involved, together with DnaK and GrpE, in the DNA replication of plasmids through activation of initiation proteins. This Fusobacterium nucleatum subsp. polymorphum (Fusobacterium polymorphum) protein is Chaperone protein DnaJ.